The following is a 747-amino-acid chain: Tripartite terminase subunit 3 (747 aa).

The Nuclear localization signal motif lies at 194–198 (KRAKV). The Walker A motif motif lies at 267–274 (VPRRHGKT). The Walker B motif signature appears at 361–366 (LLFVDE). The active-site For ATPase activity is Glu366. Catalysis depends on for nuclease activity residues Asp521, Glu593, and Asp722.

Belongs to the herpesviridae TRM3 protein family. In terms of assembly, interacts with the terminase subunits TRM1 and TRM2. Interacts with portal protein.

The protein localises to the host nucleus. In terms of biological role, component of the molecular motor that translocates viral genomic DNA in empty capsid during DNA packaging. Forms a tripartite terminase complex together with TRM1 and TRM2 in the host cytoplasm. Once the complex reaches the host nucleus, it interacts with the capsid portal vertex. This portal forms a ring in which genomic DNA is translocated into the capsid. TRM3 carries an RNase H-like nuclease activity that plays an important role for the cleavage of concatemeric viral DNA into unit length genomes. The protein is Tripartite terminase subunit 3 of Homo sapiens (Human).